Reading from the N-terminus, the 305-residue chain is Serine/threonine-protein phosphatase PP1-delta (305 aa).

D62, H64, D90, and N122 together coordinate Mn(2+). H123 serves as the catalytic Proton donor. Mn(2+)-binding residues include H172 and H247.

This sequence belongs to the PPP phosphatase family. In terms of tissue distribution, expressed in male germline including spermatocytes, spermatids and spermatozoa.

It localises to the chromosome. The protein localises to the cell projection. It is found in the pseudopodium. The protein resides in the cytoplasm. It catalyses the reaction O-phospho-L-seryl-[protein] + H2O = L-seryl-[protein] + phosphate. The catalysed reaction is O-phospho-L-threonyl-[protein] + H2O = L-threonyl-[protein] + phosphate. In terms of biological role, probable phosphatase which plays a redundant role with gsp-4 in spermatogenesis by regulating sister chromatid segregation during meiosis. In addition, involved in sperm motility by controlling the dynamic disassembly of major sperm proteins (MSP) in the spermatozoan pseudopodium. In Caenorhabditis elegans, this protein is Serine/threonine-protein phosphatase PP1-delta.